Here is a 901-residue protein sequence, read N- to C-terminus: HTH-type transcriptional regulator MalT (901 aa).

39–46 (SPAGYGKT) contributes to the ATP binding site. The region spanning 829–894 (ELIRTSPLTQ…AAVQHAQKLL (66 aa)) is the HTH luxR-type domain. The H-T-H motif DNA-binding region spans 853 to 872 (NEQIAGELEVAATTIKTHIR).

Belongs to the MalT family. As to quaternary structure, monomer in solution. Oligomerizes to an active state in the presence of the positive effectors ATP and maltotriose.

With respect to regulation, activated by ATP and maltotriose, which are both required for DNA binding. Functionally, positively regulates the transcription of the maltose regulon whose gene products are responsible for uptake and catabolism of malto-oligosaccharides. Specifically binds to the promoter region of its target genes, recognizing a short DNA motif called the MalT box. This chain is HTH-type transcriptional regulator MalT, found in Escherichia coli O6:H1 (strain CFT073 / ATCC 700928 / UPEC).